A 269-amino-acid polypeptide reads, in one-letter code: Protein shisa-1 (269 aa).

The first 18 residues, 1–18, serve as a signal peptide directing secretion; sequence MEFIVLLTVCALLGLSCG. At 19–98 the chain is on the extracellular side; the sequence is QHGEYCHGWT…LPPTVPTYFP (80 aa). A helical membrane pass occupies residues 99 to 119; it reads FLLVGSIFVSFVILGSLVGLC. Over 120–269 the chain is Cytoplasmic; sequence CCKCLKPEDD…TVCSGSPSKC (150 aa). The tract at residues 129 to 167 is disordered; the sequence is DTQVSGPAPIQSRLLDQDPSTDTSRHSSSSSASMPRPPI. The segment covering 146-162 has biased composition (low complexity); it reads DPSTDTSRHSSSSSASM.

It belongs to the shisa family. As to quaternary structure, interacts with immature forms of fzd8 and fgfr.

The protein resides in the endoplasmic reticulum. The protein localises to the membrane. Functionally, required for head formation during gastrulation. Functions as an inhibitor for the caudalizing signals wnt and fgf, does not inhibit bmp, activin and nodal signaling in head formation process. Induces retention of fzd8 in the endoplasmic reticulum and inhibits trafficking of fzd8 to the cell surface. The sequence is that of Protein shisa-1 (shisa1) from Xenopus laevis (African clawed frog).